Consider the following 490-residue polypeptide: Allantoin permease (490 aa).

12 helical membrane passes run Ile-36 to Ile-56, Pro-60 to Leu-80, Ala-116 to Leu-136, Ile-151 to Leu-171, Leu-190 to Gly-210, Thr-225 to Leu-245, Phe-265 to Gly-285, Tyr-308 to Ala-328, Gly-350 to Ala-370, Val-373 to Ala-393, Ala-425 to Leu-445, and Leu-448 to Met-468.

The protein belongs to the purine-cytosine permease (2.A.39) family.

Its subcellular location is the cell membrane. It carries out the reaction (S)-allantoin(in) + H(+)(in) = (S)-allantoin(out) + H(+)(out). Uptake of allantoin into the cell. Allantoin uptake is not dependent on sodium, and PucI is likely to be a proton-coupled symporter. Shows highest recognition for binding of allantoin, good recognition for binding of hydantoin, L-5-benzylhydantoin and 5-hydroxyhydantoin, and to a lesser extent for a range of nucleobases and nucleosides. The protein is Allantoin permease of Bacillus subtilis (strain 168).